A 68-amino-acid polypeptide reads, in one-letter code: Small ribosomal subunit protein bS21 (68 aa).

Positions 36–68 (YEKPSEKRARERAAAVRRSRKLERKRAERDGIR) are disordered. A compositionally biased stretch (basic and acidic residues) spans 37-49 (EKPSEKRARERAA). The span at 50–59 (AVRRSRKLER) shows a compositional bias: basic residues.

The protein belongs to the bacterial ribosomal protein bS21 family.

In Zymomonas mobilis subsp. mobilis (strain ATCC 31821 / ZM4 / CP4), this protein is Small ribosomal subunit protein bS21.